A 229-amino-acid polypeptide reads, in one-letter code: Uracil-DNA glycosylase (229 aa).

The active-site Proton acceptor is Asp64.

The protein belongs to the uracil-DNA glycosylase (UDG) superfamily. UNG family.

Its subcellular location is the cytoplasm. The catalysed reaction is Hydrolyzes single-stranded DNA or mismatched double-stranded DNA and polynucleotides, releasing free uracil.. In terms of biological role, excises uracil residues from the DNA which can arise as a result of misincorporation of dUMP residues by DNA polymerase or due to deamination of cytosine. This is Uracil-DNA glycosylase from Escherichia fergusonii (strain ATCC 35469 / DSM 13698 / CCUG 18766 / IAM 14443 / JCM 21226 / LMG 7866 / NBRC 102419 / NCTC 12128 / CDC 0568-73).